A 214-amino-acid chain; its full sequence is Small ribosomal subunit protein uS2 (214 aa).

It belongs to the universal ribosomal protein uS2 family.

This chain is Small ribosomal subunit protein uS2, found in Thermofilum pendens (strain DSM 2475 / Hrk 5).